A 147-amino-acid chain; its full sequence is Large ribosomal subunit protein bL9 (147 aa).

The protein belongs to the bacterial ribosomal protein bL9 family.

In terms of biological role, binds to the 23S rRNA. This is Large ribosomal subunit protein bL9 from Bacteroides thetaiotaomicron (strain ATCC 29148 / DSM 2079 / JCM 5827 / CCUG 10774 / NCTC 10582 / VPI-5482 / E50).